Consider the following 543-residue polypeptide: CTP synthase (543 aa).

The amidoligase domain stretch occupies residues 1 to 265 (MTRYVFITGG…DREVLRHFGL (265 aa)). Residue Ser-13 coordinates CTP. Ser-13 lines the UTP pocket. 14–19 (SLGKGI) provides a ligand contact to ATP. Tyr-54 lines the L-glutamine pocket. Asp-71 provides a ligand contact to ATP. 2 residues coordinate Mg(2+): Asp-71 and Glu-139. Residues 146–148 (DIE), 186–191 (KTKPTQ), and Lys-222 each bind CTP. UTP contacts are provided by residues 186 to 191 (KTKPTQ) and Lys-222. An ATP-binding site is contributed by Val-240. The 252-residue stretch at 291–542 (TIAVVGKYTN…IEAAVKQMRL (252 aa)) folds into the Glutamine amidotransferase type-1 domain. Gly-353 contacts L-glutamine. Cys-380 serves as the catalytic Nucleophile; for glutamine hydrolysis. L-glutamine-binding positions include 381 to 384 (FGMQ), Glu-404, and Arg-470. Catalysis depends on residues His-515 and Glu-517.

Belongs to the CTP synthase family. In terms of assembly, homotetramer.

The catalysed reaction is UTP + L-glutamine + ATP + H2O = CTP + L-glutamate + ADP + phosphate + 2 H(+). It catalyses the reaction L-glutamine + H2O = L-glutamate + NH4(+). The enzyme catalyses UTP + NH4(+) + ATP = CTP + ADP + phosphate + 2 H(+). Its pathway is pyrimidine metabolism; CTP biosynthesis via de novo pathway; CTP from UDP: step 2/2. With respect to regulation, allosterically activated by GTP, when glutamine is the substrate; GTP has no effect on the reaction when ammonia is the substrate. The allosteric effector GTP functions by stabilizing the protein conformation that binds the tetrahedral intermediate(s) formed during glutamine hydrolysis. Inhibited by the product CTP, via allosteric rather than competitive inhibition. Catalyzes the ATP-dependent amination of UTP to CTP with either L-glutamine or ammonia as the source of nitrogen. Regulates intracellular CTP levels through interactions with the four ribonucleotide triphosphates. The sequence is that of CTP synthase from Acidiphilium cryptum (strain JF-5).